Here is a 209-residue protein sequence, read N- to C-terminus: Large ribosomal subunit protein uL3 (209 aa).

Residues 133 to 152 are disordered; it reads THGNSLSHRVPGSIGQNQTP. Q150 bears the N5-methylglutamine mark.

It belongs to the universal ribosomal protein uL3 family. Part of the 50S ribosomal subunit. Forms a cluster with proteins L14 and L19. Post-translationally, methylated by PrmB.

Its function is as follows. One of the primary rRNA binding proteins, it binds directly near the 3'-end of the 23S rRNA, where it nucleates assembly of the 50S subunit. This chain is Large ribosomal subunit protein uL3, found in Sodalis glossinidius (strain morsitans).